The following is a 265-amino-acid chain: Auxin-responsive protein IAA22 (265 aa).

Disordered regions lie at residues 54–88 (LSTPKPADADDLMNKMKPCSDEGHGSRDAAQERRP) and 172–199 (DGREAGSGRRPAAGVDQVSERPDVSPAM). The segment covering 65–88 (LMNKMKPCSDEGHGSRDAAQERRP) has biased composition (basic and acidic residues). The region spanning 91 to 194 (TMFVKVNLEG…GVDQVSERPD (104 aa)) is the PB1 domain.

The protein belongs to the Aux/IAA family. In terms of assembly, homodimers and heterodimers. Highly expressed in flowers. Expressed in roots and seedlings.

It localises to the nucleus. In terms of biological role, aux/IAA proteins are short-lived transcriptional factors that function as repressors of early auxin response genes at low auxin concentrations. The sequence is that of Auxin-responsive protein IAA22 (IAA22) from Oryza sativa subsp. japonica (Rice).